A 567-amino-acid polypeptide reads, in one-letter code: Formate--tetrahydrofolate ligase (567 aa).

68 to 75 is an ATP binding site; it reads TPLGEGKT.

Belongs to the formate--tetrahydrofolate ligase family.

The enzyme catalyses (6S)-5,6,7,8-tetrahydrofolate + formate + ATP = (6R)-10-formyltetrahydrofolate + ADP + phosphate. It functions in the pathway one-carbon metabolism; tetrahydrofolate interconversion. The chain is Formate--tetrahydrofolate ligase from Desulforamulus reducens (strain ATCC BAA-1160 / DSM 100696 / MI-1) (Desulfotomaculum reducens).